A 99-amino-acid polypeptide reads, in one-letter code: Putative protein YgeP (99 aa).

The sequence is that of Putative protein YgeP (ygeP) from Escherichia coli (strain K12).